The chain runs to 434 residues: Ribosomal protein uS12 methylthiotransferase RimO (434 aa).

An MTTase N-terminal domain is found at 2–112 (AKIGFVSLGC…VLEAVQEVLP (111 aa)). [4Fe-4S] cluster contacts are provided by C11, C47, C76, C142, C146, and C149. A Radical SAM core domain is found at 128 to 365 (LTPRHYAYVK…LEVQARVSLR (238 aa)). One can recognise a TRAM domain in the interval 368–434 (QRFVGKTLEV…DTYDLHGVQA (67 aa)).

It belongs to the methylthiotransferase family. RimO subfamily. Requires [4Fe-4S] cluster as cofactor.

Its subcellular location is the cytoplasm. It carries out the reaction L-aspartate(89)-[ribosomal protein uS12]-hydrogen + (sulfur carrier)-SH + AH2 + 2 S-adenosyl-L-methionine = 3-methylsulfanyl-L-aspartate(89)-[ribosomal protein uS12]-hydrogen + (sulfur carrier)-H + 5'-deoxyadenosine + L-methionine + A + S-adenosyl-L-homocysteine + 2 H(+). Functionally, catalyzes the methylthiolation of an aspartic acid residue of ribosomal protein uS12. The chain is Ribosomal protein uS12 methylthiotransferase RimO from Thermus thermophilus (strain ATCC BAA-163 / DSM 7039 / HB27).